Reading from the N-terminus, the 99-residue chain is Large ribosomal subunit protein uL23 (99 aa).

It belongs to the universal ribosomal protein uL23 family. As to quaternary structure, part of the 50S ribosomal subunit. Contacts protein L29, and trigger factor when it is bound to the ribosome.

One of the early assembly proteins it binds 23S rRNA. One of the proteins that surrounds the polypeptide exit tunnel on the outside of the ribosome. Forms the main docking site for trigger factor binding to the ribosome. This chain is Large ribosomal subunit protein uL23, found in Pseudomonas savastanoi pv. phaseolicola (strain 1448A / Race 6) (Pseudomonas syringae pv. phaseolicola (strain 1448A / Race 6)).